The primary structure comprises 624 residues: DNA-directed RNA polymerase subunit gamma (624 aa).

Zn(2+) is bound by residues C70, C72, C85, and C88. 3 residues coordinate Mg(2+): D466, D468, and D470.

Belongs to the RNA polymerase beta' chain family. RpoC1 subfamily. As to quaternary structure, in cyanobacteria the RNAP catalytic core is composed of 2 alpha, 1 beta, 1 beta', 1 gamma and 1 omega subunit. When a sigma factor is associated with the core the holoenzyme is formed, which can initiate transcription. The cofactor is Mg(2+). Zn(2+) is required as a cofactor.

The catalysed reaction is RNA(n) + a ribonucleoside 5'-triphosphate = RNA(n+1) + diphosphate. Its function is as follows. DNA-dependent RNA polymerase catalyzes the transcription of DNA into RNA using the four ribonucleoside triphosphates as substrates. The polypeptide is DNA-directed RNA polymerase subunit gamma (Synechococcus sp. (strain ATCC 27144 / PCC 6301 / SAUG 1402/1) (Anacystis nidulans)).